The sequence spans 212 residues: Peptidyl-prolyl cis-trans isomerase-like 3 (212 aa).

The PPIase cyclophilin-type domain maps to methionine 1–isoleucine 198.

This sequence belongs to the cyclophilin-type PPIase family. PPIL3 subfamily.

It catalyses the reaction [protein]-peptidylproline (omega=180) = [protein]-peptidylproline (omega=0). Functionally, PPIases accelerate the folding of proteins. It catalyzes the cis-trans isomerization of proline imidic peptide bonds in oligopeptides. This is Peptidyl-prolyl cis-trans isomerase-like 3 (cyp10) from Aspergillus fumigatus (strain ATCC MYA-4609 / CBS 101355 / FGSC A1100 / Af293) (Neosartorya fumigata).